A 224-amino-acid chain; its full sequence is Putative O-methyltransferase MUL_4520 (224 aa).

Residues 1–11 are compositionally biased toward polar residues; it reads MHGTDSSSDTP. A disordered region spans residues 1-20; sequence MHGTDSSSDTPGQPAPSRAE. Residues V51, E73, 75 to 76, S81, D99, and I100 contribute to the S-adenosyl-L-methionine site; that span reads GT. D147 contacts substrate. Position 149 (D149) interacts with S-adenosyl-L-methionine.

Belongs to the class I-like SAM-binding methyltransferase superfamily. Cation-dependent O-methyltransferase family.

This chain is Putative O-methyltransferase MUL_4520, found in Mycobacterium ulcerans (strain Agy99).